The sequence spans 494 residues: 3-octaprenyl-4-hydroxybenzoate carboxy-lyase (494 aa).

Residue asparagine 172 coordinates Mn(2+). Residues 175–177 (IYR), 189–191 (RWL), and 194–195 (RG) contribute to the prenylated FMN site. Mn(2+) is bound at residue glutamate 238. The active-site Proton donor is aspartate 287.

Belongs to the UbiD family. Homohexamer. Prenylated FMN serves as cofactor. It depends on Mn(2+) as a cofactor.

Its subcellular location is the cell membrane. It catalyses the reaction a 4-hydroxy-3-(all-trans-polyprenyl)benzoate + H(+) = a 2-(all-trans-polyprenyl)phenol + CO2. The protein operates within cofactor biosynthesis; ubiquinone biosynthesis. In terms of biological role, catalyzes the decarboxylation of 3-octaprenyl-4-hydroxy benzoate to 2-octaprenylphenol, an intermediate step in ubiquinone biosynthesis. The chain is 3-octaprenyl-4-hydroxybenzoate carboxy-lyase from Escherichia coli O139:H28 (strain E24377A / ETEC).